The following is a 658-amino-acid chain: Probable replication factor A 73 kDa subunit (658 aa).

2 disordered regions span residues Pro134 to Ile155 and Ser169 to Gly222. A DNA-binding region (OB) is located at residues Phe236–Ala326. The C4-type zinc finger occupies Cys518 to Cys539.

Belongs to the replication factor A protein 1 family. Component of the heterotrimeric canonical replication protein A complex (RPA).

The protein localises to the nucleus. As part of the heterotrimeric replication protein A complex (RPA/RP-A), binds and stabilizes single-stranded DNA intermediates, that form during DNA replication or upon DNA stress. It prevents their reannealing and in parallel, recruits and activates different proteins and complexes involved in DNA metabolism. Thereby, it plays an essential role both in DNA replication and the cellular response to DNA damage. In Caenorhabditis briggsae, this protein is Probable replication factor A 73 kDa subunit.